The following is a 742-amino-acid chain: Protein-lysine N-methyltransferase SMYD4 (742 aa).

110–112 (RSA) provides a ligand contact to S-adenosyl-L-methionine. The region spanning 230-569 (SSLSLNFSTE…SGQEIFHCYG (340 aa)) is the SET domain. Zn(2+) is bound by residues Cys295, Cys298, Cys308, Cys311, Cys317, Cys321, His330, and Cys334. The MYND-type zinc-finger motif lies at 295-334 (CHHCLKQLLASIPCCGCSYAKYCSQNCADVAWEQYHRTEC). S-adenosyl-L-methionine contacts are provided by residues Asn418, 534-535 (NH), and Tyr568.

Belongs to the class V-like SAM-binding methyltransferase superfamily.

It is found in the nucleus. It localises to the cytoplasm. It catalyses the reaction L-lysyl-[protein] + S-adenosyl-L-methionine = N(6)-methyl-L-lysyl-[protein] + S-adenosyl-L-homocysteine + H(+). Functionally, protein-lysine N-methyltransferase. Monomethylates PRMT5, modulating its transcriptional activity. May also act as a histone methyltransferase. Plays a critical role in cardiac development. Acts as a key epigenetic regulator of gene expression during cardiac development via its dual activities as a methyltransferase and negative regulator of HDAC1. The protein is Protein-lysine N-methyltransferase SMYD4 (SMYD4) of Gallus gallus (Chicken).